We begin with the raw amino-acid sequence, 315 residues long: Olfactory receptor 3A10 (315 aa).

The Extracellular segment spans residues 1-28; it reads MEPGAWGNRTAVTDFILLGLTGNVRLQP. Residue N8 is glycosylated (N-linked (GlcNAc...) asparagine). The helical transmembrane segment at 29–49 threads the bilayer; that stretch reads ILFVVFFFAYIVTVGGNLSIL. At 50 to 68 the chain is on the cytoplasmic side; the sequence is AAIFVEPKLHTPMYYFLGN. Residues 69–89 form a helical membrane-spanning segment; that stretch reads LSLLDIGCISVTVPPMLVCLL. At 90 to 97 the chain is on the extracellular side; sequence AHECRVPY. The chain crosses the membrane as a helical span at residues 98–118; the sequence is AACISQLFFFHLLAGVDCHLL. Residues C100 and C192 are joined by a disulfide bond. At 119–145 the chain is on the cytoplasmic side; it reads TAMAYDRYLAICQPLTYSTRMSREVQG. A helical transmembrane segment spans residues 146 to 166; it reads TLVGICCTVSFINALTHTVAV. Topologically, residues 167-200 are extracellular; that stretch reads SVLDFCGPNVVNHFYCDLPPLFQLSCSSIYLNGQ. Residues 201 to 221 traverse the membrane as a helical segment; sequence LLFVGATFMGVVPMILISVSY. Over 222–239 the chain is Cytoplasmic; that stretch reads AHVAAAVLRIRSTEGRKK. The chain crosses the membrane as a helical span at residues 240–260; it reads AFSTCGSHLTVVCIFYGTGFF. Residues 261 to 274 lie on the Extracellular side of the membrane; it reads SYMRLGSVSASDKD. A helical membrane pass occupies residues 275 to 295; sequence KGIGILNTILSPMLNPLIYSL. Topologically, residues 296–315 are cytoplasmic; sequence RNPDVQGALKRVLTGKRYPV.

The protein belongs to the G-protein coupled receptor 1 family.

It is found in the cell membrane. In terms of biological role, odorant receptor. The polypeptide is Olfactory receptor 3A10 (Mus musculus (Mouse)).